The sequence spans 117 residues: Ribosome-binding factor A (117 aa).

Belongs to the RbfA family. In terms of assembly, monomer. Binds 30S ribosomal subunits, but not 50S ribosomal subunits or 70S ribosomes.

The protein resides in the cytoplasm. One of several proteins that assist in the late maturation steps of the functional core of the 30S ribosomal subunit. Associates with free 30S ribosomal subunits (but not with 30S subunits that are part of 70S ribosomes or polysomes). Required for efficient processing of 16S rRNA. May interact with the 5'-terminal helix region of 16S rRNA. In Streptococcus thermophilus (strain CNRZ 1066), this protein is Ribosome-binding factor A.